The sequence spans 388 residues: Zinc finger protein 1 (388 aa).

Polar residues predominate over residues 1-19 (MSSIPNINWNDPNNGKSNT). Disordered regions lie at residues 1-120 (MSSI…QQPL), 157-219 (LQQR…QQWD), and 236-311 (SSIQ…KPIT). Residues 20-38 (SRQSQPQPQLPSNVSPPNS) show a composition bias toward low complexity. Polar residues-rich tracts occupy residues 52-67 (YGSS…NPNT) and 88-97 (YPVQQTAQQR). Composition is skewed to low complexity over residues 102 to 120 (LQQV…QQPL) and 157 to 172 (LQQR…KSQL). The segment covering 173–203 (NEQNAMMSASTQQYPVQDFTNPYPNAQNPAE) has biased composition (polar residues). 2 stretches are compositionally biased toward low complexity: residues 204–217 (QQQQ…QSQQ) and 236–259 (SSIQ…KQQQ). A compositionally biased stretch (basic residues) spans 268–278 (KKKPGRKPKLR). Residues 282 to 294 (ESSSETPQVPKTA) are compositionally biased toward polar residues. Positions 318–345 (CLTCRQRKKRCCETRPRCTECTRLRLNC) form a DNA-binding region, zn(2)-C6 fungal-type. Residues 348-367 (PKPGTEHKNKPKDQKDDENT) form a disordered region. The segment covering 351-367 (GTEHKNKPKDQKDDENT) has biased composition (basic and acidic residues).

The protein localises to the nucleus. Perhaps a regulatory role. May be involved in transcriptional activation. The sequence is that of Zinc finger protein 1 (CZF1) from Candida albicans (strain WO-1) (Yeast).